Reading from the N-terminus, the 393-residue chain is S-adenosylmethionine synthase 1 (393 aa).

Position 9 (glutamate 9) interacts with Mg(2+). Histidine 15 lines the ATP pocket. Residue glutamate 43 coordinates K(+). L-methionine-binding residues include glutamate 56 and glutamine 99. An S-nitrosocysteine modification is found at cysteine 114. Residues 167-169, 235-238, aspartate 246, 252-253, alanine 269, lysine 273, and lysine 277 each bind ATP; these read DGK, SGRF, and RK. Position 246 (aspartate 246) interacts with L-methionine. An L-methionine-binding site is contributed by lysine 277.

This sequence belongs to the AdoMet synthase family. As to quaternary structure, homotetramer. Interacts with GRF3. Mn(2+) serves as cofactor. The cofactor is Mg(2+). It depends on Co(2+) as a cofactor. Requires K(+) as cofactor. Post-translationally, S-nitrosylated in the presence of NO. The inhibition of SAM1 activity by S-nitrosylation could contribute to the cross-talk between ethylene and NO signaling. Highly expressed in stems and roots.

Its subcellular location is the cytoplasm. The catalysed reaction is L-methionine + ATP + H2O = S-adenosyl-L-methionine + phosphate + diphosphate. It functions in the pathway amino-acid biosynthesis; S-adenosyl-L-methionine biosynthesis; S-adenosyl-L-methionine from L-methionine: step 1/1. Reversibly inhibited by NO. Inhibited by 5,5'-dithiobis-2-nitrobenzoic acid (DTNB) and N-ethylmaleimide (NEM) (in vitro). Catalyzes the formation of S-adenosylmethionine from methionine and ATP. The reaction comprises two steps that are both catalyzed by the same enzyme: formation of S-adenosylmethionine (AdoMet) and triphosphate, and subsequent hydrolysis of the triphosphate. The chain is S-adenosylmethionine synthase 1 (SAM1) from Arabidopsis thaliana (Mouse-ear cress).